A 479-amino-acid polypeptide reads, in one-letter code: Integrator complex subunit 12 (479 aa).

Residues 57 to 140 (SKVSLPKMTK…SPIAFQTKDI (84 aa)) are disordered. The segment covering 70–90 (KSSSSSSASSSITTTSSSKSS) has biased composition (low complexity). Over residues 91-128 (TSEKSKKESEKRTLEKIRVDPGEGVEPPKKPRLEKQDS) the composition is skewed to basic and acidic residues. The PHD-type zinc-finger motif lies at 161-217 (GLACVVCRQMTVTSGNQLVECQECHNLYHQECHKPQVTDKDVNDPRLVWYCARCTRQ). Disordered regions lie at residues 221-241 (MAQK…TTVP), 274-293 (TAAS…LPPG), and 305-479 (SNVG…KLKK). 2 stretches are compositionally biased toward low complexity: residues 223 to 239 (QKTQ…LATT) and 280 to 289 (SSSSSSSSSS). Residues 305–328 (SNVGPSSTKLSTSQSGNSKTSPAA) show a composition bias toward polar residues. Positions 354-364 (SSAGSGNGNNG) are enriched in gly residues. Residues 399–411 (GSLSPGAAPSSSL) are compositionally biased toward low complexity. Residues 412–428 (GGNGGSGGNGAGNGGNS) show a composition bias toward gly residues. The segment covering 429-451 (AGSSSSSGNNNNNGAKASADGKA) has biased composition (low complexity). A compositionally biased stretch (basic residues) spans 466 to 479 (QMVKKKAAQKKLKK).

This sequence belongs to the Integrator subunit 12 family. In terms of assembly, component of the Integrator complex, composed of core subunits INTS1, INTS2, INTS3, INTS4, INTS5, INTS6, INTS7, INTS8, INTS9/RC74, INTS10, INTS11/CPSF3L, INTS12, INTS13, INTS14 and INTS15. The core complex associates with protein phosphatase 2A subunits PPP2CA and PPP2R1A, to form the Integrator-PP2A (INTAC) complex.

It localises to the nucleus. Component of the integrator complex, a multiprotein complex that terminates RNA polymerase II (Pol II) transcription in the promoter-proximal region of genes. The integrator complex provides a quality checkpoint during transcription elongation by driving premature transcription termination of transcripts that are unfavorably configured for transcriptional elongation: the complex terminates transcription by (1) catalyzing dephosphorylation of the C-terminal domain (CTD) of Pol II subunit POLR2A/RPB1 and SUPT5H/SPT5, (2) degrading the exiting nascent RNA transcript via endonuclease activity and (3) promoting the release of Pol II from bound DNA. The integrator complex is also involved in terminating the synthesis of non-coding Pol II transcripts, such as enhancer RNAs (eRNAs), small nuclear RNAs (snRNAs), telomerase RNAs and long non-coding RNAs (lncRNAs). This is Integrator complex subunit 12 (ints12) from Danio rerio (Zebrafish).